Here is a 285-residue protein sequence, read N- to C-terminus: Neuralized-like protein 2 (285 aa).

Residues 1–28 (MADPSEHVGLGGPRSPARPEPPPTRFHQ) are disordered. The region spanning 23–244 (PTRFHQVHGA…STKSVRLVQL (222 aa)) is the NHR domain. Residues 250–285 (SLQTLCRLVIHKRVVHRLAIDVLHLPKGLKDFCKYE) form the SOCS box domain.

In terms of assembly, probable component the ECS(NEURL2) E3 ubiquitin-protein ligase complex consisting of ELOB/Elongin B, ELOC/Elongin C, CUL5, RBX1 and NEURL2. Interacts with CTNNB1. Expressed specifically in skeletal and cardiac muscles.

The protein resides in the cytoplasm. It participates in protein modification; protein ubiquitination. Plays an important role in the process of myofiber differentiation and maturation. Probable substrate-recognition component of a SCF-like ECS (Elongin BC-CUL2/5-SOCS-box protein) E3 ubiquitin-protein ligase complex, which mediates the ubiquitination of proteins. Probably contributes to catalysis through recognition and positioning of the substrate and the ubiquitin-conjugating enzyme. During myogenesis, controls the ubiquitination and degradation of the specific pool of CTNNB1/beta-catenin located at the sarcolemma. The sequence is that of Neuralized-like protein 2 (Neurl2) from Mus musculus (Mouse).